The sequence spans 428 residues: tRNA(Ile)-lysidine synthase (428 aa).

An ATP-binding site is contributed by 28-33; that stretch reads SGGVDS.

This sequence belongs to the tRNA(Ile)-lysidine synthase family.

It is found in the cytoplasm. It catalyses the reaction cytidine(34) in tRNA(Ile2) + L-lysine + ATP = lysidine(34) in tRNA(Ile2) + AMP + diphosphate + H(+). Functionally, ligates lysine onto the cytidine present at position 34 of the AUA codon-specific tRNA(Ile) that contains the anticodon CAU, in an ATP-dependent manner. Cytidine is converted to lysidine, thus changing the amino acid specificity of the tRNA from methionine to isoleucine. In Streptococcus pyogenes serotype M1, this protein is tRNA(Ile)-lysidine synthase.